A 511-amino-acid polypeptide reads, in one-letter code: Histidine ammonia-lyase (511 aa).

A cross-link (5-imidazolinone (Ala-Gly)) is located at residues 144 to 146; it reads ASG. Ser-145 is subject to 2,3-didehydroalanine (Ser).

The protein belongs to the PAL/histidase family. Post-translationally, contains an active site 4-methylidene-imidazol-5-one (MIO), which is formed autocatalytically by cyclization and dehydration of residues Ala-Ser-Gly.

It is found in the cytoplasm. It carries out the reaction L-histidine = trans-urocanate + NH4(+). Its pathway is amino-acid degradation; L-histidine degradation into L-glutamate; N-formimidoyl-L-glutamate from L-histidine: step 1/3. The polypeptide is Histidine ammonia-lyase (Halalkalibacterium halodurans (strain ATCC BAA-125 / DSM 18197 / FERM 7344 / JCM 9153 / C-125) (Bacillus halodurans)).